A 101-amino-acid chain; its full sequence is Protein Tat (101 aa).

An interaction with human CREBBP region spans residues 1–24 (MEPVDPNLEPWNHPGSQPKTACNN). The segment at 1–48 (MEPVDPNLEPWNHPGSQPKTACNNCYCKRCSYHCLVCFQTKGLGISYG) is transactivation. The Zn(2+) site is built by Cys-22, Cys-25, and Cys-27. The cysteine-rich stretch occupies residues 22 to 37 (CNNCYCKRCSYHCLVC). The residue at position 28 (Lys-28) is an N6-acetyllysine; by host PCAF. The Zn(2+) site is built by Cys-30, His-33, Cys-34, and Cys-37. A core region spans residues 38-48 (FQTKGLGISYG). The tract at residues 47-101 (YGRKKRRQRRSAPPSSEDHQNPIPKQPLPQTRGDQTGSEESKKKVESKTETDPFD) is disordered. Positions 49-57 (RKKRRQRRS) match the Nuclear localization signal, RNA-binding (TAR), and protein transduction motif. The interval 49–86 (RKKRRQRRSAPPSSEDHQNPIPKQPLPQTRGDQTGSEE) is interaction with the host capping enzyme RNGTT. Lys-50 and Lys-51 each carry N6-acetyllysine; by host EP300 and GCN5L2. Residues Arg-52 and Arg-53 each carry the asymmetric dimethylarginine; by host PRMT6 modification. A Glycyl lysine isopeptide (Lys-Gly) (interchain with G-Cter in ubiquitin) cross-link involves residue Lys-71. Residues 78 to 80 (RGD) carry the Cell attachment site motif. Positions 85–101 (EESKKKVESKTETDPFD) are enriched in basic and acidic residues.

It belongs to the lentiviruses Tat family. In terms of assembly, interacts with host CCNT1. Associates with the P-TEFb complex composed at least of Tat, P-TEFb (CDK9 and CCNT1), TAR RNA, RNA Pol II. Recruits the HATs CREBBP, TAF1/TFIID, EP300, PCAF and GCN5L2. Interacts with host KAT5/Tip60; this interaction targets the latter to degradation. Interacts with the host deacetylase SIRT1. Interacts with host capping enzyme RNGTT; this interaction stimulates RNGTT. Binds to host KDR, and to the host integrins ITGAV/ITGB3 and ITGA5/ITGB1. Interacts with host KPNB1/importin beta-1 without previous binding to KPNA1/importin alpha-1. Interacts with EIF2AK2. Interacts with host nucleosome assembly protein NAP1L1; this interaction may be required for the transport of Tat within the nucleus, since the two proteins interact at the nuclear rim. Interacts with host C1QBP/SF2P32; this interaction involves lysine-acetylated Tat. Interacts with the host chemokine receptors CCR2, CCR3 and CXCR4. Interacts with host DPP4/CD26; this interaction may trigger an anti-proliferative effect. Interacts with host LDLR. Interacts with the host extracellular matrix metalloproteinase MMP1. Interacts with host PRMT6; this interaction mediates Tat's methylation. Interacts with, and is ubiquitinated by MDM2/Hdm2. Interacts with host PSMC3 and HTATIP2. Interacts with STAB1; this interaction may overcome SATB1-mediated repression of IL2 and IL2RA (interleukin) in T cells by binding to the same domain than HDAC1. Interacts (when acetylated) with human CDK13, thereby increasing HIV-1 mRNA splicing and promoting the production of the doubly spliced HIV-1 protein Nef. Interacts with host TBP; this interaction modulates the activity of transcriptional pre-initiation complex. Interacts with host RELA. Interacts with host PLSCR1; this interaction negatively regulates Tat transactivation activity by altering its subcellular distribution. Post-translationally, asymmetrical arginine methylation by host PRMT6 seems to diminish the transactivation capacity of Tat and affects the interaction with host CCNT1. Acetylation by EP300, CREBBP, GCN5L2/GCN5 and PCAF regulates the transactivation activity of Tat. EP300-mediated acetylation of Lys-50 promotes dissociation of Tat from the TAR RNA through the competitive binding to PCAF's bromodomain. In addition, the non-acetylated Tat's N-terminus can also interact with PCAF. PCAF-mediated acetylation of Lys-28 enhances Tat's binding to CCNT1. Lys-50 is deacetylated by SIRT1. In terms of processing, polyubiquitination by host MDM2 does not target Tat to degradation, but activates its transactivation function and fosters interaction with CCNT1 and TAR RNA. Post-translationally, phosphorylated by EIF2AK2 on serine and threonine residues adjacent to the basic region important for TAR RNA binding and function. Phosphorylation of Tat by EIF2AK2 is dependent on the prior activation of EIF2AK2 by dsRNA.

The protein localises to the host nucleus. It is found in the host nucleolus. The protein resides in the host cytoplasm. Its subcellular location is the secreted. In terms of biological role, transcriptional activator that increases RNA Pol II processivity, thereby increasing the level of full-length viral transcripts. Recognizes a hairpin structure at the 5'-LTR of the nascent viral mRNAs referred to as the transactivation responsive RNA element (TAR) and recruits the cyclin T1-CDK9 complex (P-TEFb complex) that will in turn hyperphosphorylate the RNA polymerase II to allow efficient elongation. The CDK9 component of P-TEFb and other Tat-activated kinases hyperphosphorylate the C-terminus of RNA Pol II that becomes stabilized and much more processive. Other factors such as HTATSF1/Tat-SF1, SUPT5H/SPT5, and HTATIP2 are also important for Tat's function. Besides its effect on RNA Pol II processivity, Tat induces chromatin remodeling of proviral genes by recruiting the histone acetyltransferases (HATs) CREBBP, EP300 and PCAF to the chromatin. This also contributes to the increase in proviral transcription rate, especially when the provirus integrates in transcriptionally silent region of the host genome. To ensure maximal activation of the LTR, Tat mediates nuclear translocation of NF-kappa-B by interacting with host RELA. Through its interaction with host TBP, Tat may also modulate transcription initiation. Tat can reactivate a latently infected cell by penetrating in it and transactivating its LTR promoter. In the cytoplasm, Tat is thought to act as a translational activator of HIV-1 mRNAs. Functionally, extracellular circulating Tat can be endocytosed by surrounding uninfected cells via the binding to several surface receptors such as CD26, CXCR4, heparan sulfate proteoglycans (HSPG) or LDLR. Neurons are rarely infected, but they internalize Tat via their LDLR. Through its interaction with nuclear HATs, Tat is potentially able to control the acetylation-dependent cellular gene expression. Modulates the expression of many cellular genes involved in cell survival, proliferation or in coding for cytokines or cytokine receptors. Tat plays a role in T-cell and neurons apoptosis. Tat induced neurotoxicity and apoptosis probably contribute to neuroAIDS. Circulating Tat also acts as a chemokine-like and/or growth factor-like molecule that binds to specific receptors on the surface of the cells, affecting many cellular pathways. In the vascular system, Tat binds to ITGAV/ITGB3 and ITGA5/ITGB1 integrins dimers at the surface of endothelial cells and competes with bFGF for heparin-binding sites, leading to an excess of soluble bFGF. The sequence is that of Protein Tat from Human immunodeficiency virus type 1 group M subtype C (isolate 92BR025) (HIV-1).